Reading from the N-terminus, the 405-residue chain is POC1 centriolar protein homolog A (405 aa).

WD repeat units follow at residues 17-56, 59-98, 101-140, 143-182, 185-224, 227-266, and 269-308; these read GHRDAVTCVDFSLNTKHLASGSMDSTLMIWHMKPQSRAYR, GHKDAVTCVNFSPSGHLLASGSRDKTVRIWVPNVKGESTV, AHTATVRSVHFCSDGQSLVTASDDKTVKVWSTHRQRFLFS, QHINWVRCAKFSPDGRLIVSASDDKTVKLWDKTSRECIHS, EHGGFVTYVDFHPSGTCIAAAGMDNTVKVWDARTHRLLQH, LHSAAVNALSFHPSGNYLITASSDSTLKILDLMEGRLLYT, and GHQGPATTVAFSRTGEYFASGGSDEQVMVWKSNFDIVDYG. Residues 313 to 352 form a disordered region; it reads RRPPPLTSSSGTLPKMDLPVPPGRDRSLESVQGEPQESIS. Polar residues predominate over residues 341–352; it reads ESVQGEPQESIS. Positions 367-395 form a coiled coil; that stretch reads QLDILTQTVSILEQRLTLTEDRLKQCLEN.

It belongs to the WD repeat POC1 family. Interacts with POC1B. In terms of tissue distribution, widely expressed in embryonic and adult tissues.

Its subcellular location is the cytoplasm. The protein resides in the cytoskeleton. It localises to the microtubule organizing center. The protein localises to the centrosome. It is found in the centriole. Its subcellular location is the cilium basal body. The protein resides in the spindle pole. Functionally, plays an important role in centriole assembly and/or stability and ciliogenesis. Involved in early steps of centriole duplication, as well as in the later steps of centriole length control. Acts in concert with POC1B to ensure centriole integrity and proper mitotic spindle formation. This Mus musculus (Mouse) protein is POC1 centriolar protein homolog A (Poc1a).